The primary structure comprises 137 residues: Large ribosomal subunit protein uL16 (137 aa).

The protein belongs to the universal ribosomal protein uL16 family. Part of the 50S ribosomal subunit.

Binds 23S rRNA and is also seen to make contacts with the A and possibly P site tRNAs. This is Large ribosomal subunit protein uL16 from Streptococcus uberis (strain ATCC BAA-854 / 0140J).